We begin with the raw amino-acid sequence, 81 residues long: Costars family protein ABRACL (81 aa).

This sequence belongs to the costars family.

This is Costars family protein ABRACL from Salmo salar (Atlantic salmon).